A 260-amino-acid chain; its full sequence is Hemin import ATP-binding protein HmuV (260 aa).

The 237-residue stretch at leucine 6–aspartate 242 folds into the ABC transporter domain. Glycine 38–serine 45 contacts ATP.

It belongs to the ABC transporter superfamily. Heme (hemin) importer (TC 3.A.1.14.5) family. The complex is composed of two ATP-binding proteins (HmuV), two transmembrane proteins (HmuU) and a solute-binding protein (HmuT).

Its subcellular location is the cell inner membrane. Its function is as follows. Part of the ABC transporter complex HmuTUV involved in hemin import. Responsible for energy coupling to the transport system. The sequence is that of Hemin import ATP-binding protein HmuV from Sodalis glossinidius (strain morsitans).